A 315-amino-acid chain; its full sequence is Olfactory receptor 5M10 (315 aa).

Over 1–25 the chain is Extracellular; sequence MLSPNHTIVTEFILLGLTDDPVLEK. An N-linked (GlcNAc...) asparagine glycan is attached at asparagine 5. The chain crosses the membrane as a helical span at residues 26–46; it reads ILFGVFLAIYLITLAGNLCMI. Residues 47–54 lie on the Cytoplasmic side of the membrane; it reads LLIRTNSQ. Residues 55 to 75 form a helical membrane-spanning segment; sequence LQTPMYFFLGHLSFVDICYSS. Residues 76–99 lie on the Extracellular side of the membrane; it reads NVTPNMLHNFLSEQKTISYAGCFT. A disulfide bond links cysteine 97 and cysteine 189. A helical membrane pass occupies residues 100–120; that stretch reads QCLLFIALVITEFYFLASMAL. The Cytoplasmic segment spans residues 121 to 139; sequence DRYVAICSPLHYSSRMSKN. The chain crosses the membrane as a helical span at residues 140–160; sequence ICISLVTVPYMYGFLNGLSQT. The Extracellular portion of the chain corresponds to 161–196; sequence LLTFHLSFCGSLEINHFYCADPPLIMLACSDTRVKK. A helical transmembrane segment spans residues 197-217; that stretch reads MAMFVVAGFTLSSSLFIILLS. Residues 218-237 lie on the Cytoplasmic side of the membrane; it reads YLFIFAAIFRIRSAEGRHKA. A helical membrane pass occupies residues 238 to 258; sequence FSTCASHLTIVTLFYGTLFCM. Over 259–271 the chain is Extracellular; that stretch reads YVRPPSEKSVEES. A helical membrane pass occupies residues 272–292; the sequence is KIIAVFYTFLSPMLNPLIYSL. Residues 293-315 lie on the Cytoplasmic side of the membrane; it reads RNRDVILAIQQMIRGKSFCKIAV.

It belongs to the G-protein coupled receptor 1 family.

Its subcellular location is the cell membrane. In terms of biological role, odorant receptor. This Homo sapiens (Human) protein is Olfactory receptor 5M10 (OR5M10).